The sequence spans 148 residues: [Ribosomal protein bS18]-alanine N-acetyltransferase (148 aa).

The N-acetyltransferase domain maps to 2 to 147 (NTISILSTTD…DAIIMALPIS (146 aa)). Residues 69–71 (IAV) and 77–82 (RRGLGR) contribute to the acetyl-CoA site. The active-site Proton acceptor is the E103. Position 108 (N108) interacts with acetyl-CoA. Y115 (proton donor) is an active-site residue.

Belongs to the acetyltransferase family. RimI subfamily.

It localises to the cytoplasm. The catalysed reaction is N-terminal L-alanyl-[ribosomal protein bS18] + acetyl-CoA = N-terminal N(alpha)-acetyl-L-alanyl-[ribosomal protein bS18] + CoA + H(+). Its function is as follows. Acetylates the N-terminal alanine of ribosomal protein bS18. In Salmonella typhimurium (strain LT2 / SGSC1412 / ATCC 700720), this protein is [Ribosomal protein bS18]-alanine N-acetyltransferase.